The sequence spans 253 residues: H repeat-associated putative transposase YbfD (253 aa).

The protein belongs to the transposase 11 family.

The chain is H repeat-associated putative transposase YbfD (ybfD) from Escherichia coli (strain K12).